Reading from the N-terminus, the 374-residue chain is U-box domain-containing protein 8 (374 aa).

Residues 4-79 form the U-box domain; it reads DLPNDFRCPI…LNFAHVSLKE (76 aa). ARM repeat units follow at residues 126–165, 167–206, 208–248, 250–288, and 289–327; these read SSIR…NLSL, DDNK…SLAV, EVNK…ALCS, PDNR…KCRG, and GREE…CLCC.

As to expression, expressed in the whole plant.

The enzyme catalyses S-ubiquitinyl-[E2 ubiquitin-conjugating enzyme]-L-cysteine + [acceptor protein]-L-lysine = [E2 ubiquitin-conjugating enzyme]-L-cysteine + N(6)-ubiquitinyl-[acceptor protein]-L-lysine.. Its pathway is protein modification; protein ubiquitination. In terms of biological role, functions as an E3 ubiquitin ligase. Involved in the age-dependent pseudo-self-compatibility process. The polypeptide is U-box domain-containing protein 8 (PUB8) (Arabidopsis thaliana (Mouse-ear cress)).